The following is a 224-amino-acid chain: Orotate phosphoribosyltransferase (224 aa).

5-phospho-alpha-D-ribose 1-diphosphate is bound by residues Lys-26, 73-74 (YK), Arg-100, Lys-101, Lys-104, His-106, and 127-135 (EDVTTAGTS). 2 residues coordinate orotate: Thr-131 and Arg-160.

Belongs to the purine/pyrimidine phosphoribosyltransferase family. PyrE subfamily. Homodimer. Mg(2+) serves as cofactor.

It catalyses the reaction orotidine 5'-phosphate + diphosphate = orotate + 5-phospho-alpha-D-ribose 1-diphosphate. The protein operates within pyrimidine metabolism; UMP biosynthesis via de novo pathway; UMP from orotate: step 1/2. Functionally, catalyzes the transfer of a ribosyl phosphate group from 5-phosphoribose 1-diphosphate to orotate, leading to the formation of orotidine monophosphate (OMP). The polypeptide is Orotate phosphoribosyltransferase (Clostridium acetobutylicum (strain ATCC 824 / DSM 792 / JCM 1419 / IAM 19013 / LMG 5710 / NBRC 13948 / NRRL B-527 / VKM B-1787 / 2291 / W)).